A 74-amino-acid polypeptide reads, in one-letter code: DNA-directed RNA polymerase subunit omega (74 aa).

The protein belongs to the RNA polymerase subunit omega family. The RNAP catalytic core consists of 2 alpha, 1 beta, 1 beta' and 1 omega subunit. When a sigma factor is associated with the core the holoenzyme is formed, which can initiate transcription.

It catalyses the reaction RNA(n) + a ribonucleoside 5'-triphosphate = RNA(n+1) + diphosphate. Promotes RNA polymerase assembly. Latches the N- and C-terminal regions of the beta' subunit thereby facilitating its interaction with the beta and alpha subunits. This chain is DNA-directed RNA polymerase subunit omega, found in Helicobacter acinonychis (strain Sheeba).